A 591-amino-acid chain; its full sequence is DNA ligase (591 aa).

NAD(+)-binding positions include 38–42, 87–88, and Glu119; these read DEKYD and SL. The active-site N6-AMP-lysine intermediate is Lys121. Residues Arg142, Glu181, Lys298, and Lys322 each coordinate NAD(+). Zn(2+) is bound by residues Cys415, Cys418, Cys433, and Cys439.

The protein belongs to the NAD-dependent DNA ligase family. LigA subfamily. The cofactor is Mg(2+). Mn(2+) is required as a cofactor.

The enzyme catalyses NAD(+) + (deoxyribonucleotide)n-3'-hydroxyl + 5'-phospho-(deoxyribonucleotide)m = (deoxyribonucleotide)n+m + AMP + beta-nicotinamide D-nucleotide.. In terms of biological role, DNA ligase that catalyzes the formation of phosphodiester linkages between 5'-phosphoryl and 3'-hydroxyl groups in double-stranded DNA using NAD as a coenzyme and as the energy source for the reaction. It is essential for DNA replication and repair of damaged DNA. The polypeptide is DNA ligase (Wigglesworthia glossinidia brevipalpis).